Consider the following 356-residue polypeptide: Cyanide hydratase (356 aa).

The 276-residue stretch at 15–290 folds into the CN hydrolase domain; sequence FKVAAVQAEP…EVVLYANISL (276 aa). Glu-55 (proton acceptor) is an active-site residue. The active site involves Lys-137. The Nucleophile role is filled by Cys-172. The tract at residues 331 to 356 is disordered; the sequence is DEQAASKAQQAEIDNAGKGSIVPSKL.

This sequence belongs to the carbon-nitrogen hydrolase superfamily. Nitrilase family.

It carries out the reaction formamide = hydrogen cyanide + H2O. Functionally, catalyzes the hydration of cyanide to formamide. Degradation of cyanide may be important for plant pathogenic fungi in infection of cyanogenic plants. This chain is Cyanide hydratase, found in Armillaria gallica (Bulbous honey fungus).